We begin with the raw amino-acid sequence, 399 residues long: MAARPGLLWLLGLALCVLGGGHLSHPPHVFPQRRLGVREPRDMQREIREVLGLPGRPRSRAPVGAAQQPASAPLFMLDLYRAMTDDSGGGTPQPHLDRADLIMSFVNIVERDRTLGYQEPHWKEFHFDLTQIPAGEAVTAAEFRIYKEPSTHPLNTTLHISMFEVVQEHSNRESDLFFLDLQTLRSGDEGWLVLDITAASDRWLLNHHKDLGLRLYVETEDGHSIDPGLAGLLGRQAPRSRQPFMVGFFRANQSPVRAPRTARPLKKKQLNQINQLPHSNKHLGILDDGHGSHGREVCRRHELYVSFRDLGWLDSVIAPQGYSAYYCAGECIYPLNSCMNSTNHATMQALVHLMKPDIIPKVCCVPTELSAISLLYYDRNNNVILRRERNMVVQACGCH.

The N-terminal stretch at 1–19 (MAARPGLLWLLGLALCVLG) is a signal peptide. Residues 20 to 260 (GGHLSHPPHV…ANQSPVRAPR (241 aa)) constitute a propeptide that is removed on maturation. Asn155 and Asn340 each carry an N-linked (GlcNAc...) asparagine glycan. 3 disulfides stabilise this stretch: Cys298–Cys364, Cys327–Cys396, and Cys331–Cys398.

It belongs to the TGF-beta family. As to quaternary structure, homodimer; disulfide-linked. In terms of tissue distribution, expressed in testis. Expressed in decidual cells of the uterus and in trophoblast cells of the labyrinthine region of the placenta and in the inner root sheath of hair follicles of early postnatal skin. Expressed in the extraembryonic ectoderm in pregastrula and gastrula stage mouse embryos. Expressed in brown adipose tissue and brain.

It localises to the secreted. Its function is as follows. Induces cartilage and bone formation. May be the osteoinductive factor responsible for the phenomenon of epithelial osteogenesis. Plays a role in calcium regulation and bone homeostasis. Involved in the generation of primordial germ cells; this function involves Bmp4 in a synergistic manner though separate receptor complexes seem to be involved. Required for the initiation and maintenance of spermatogenesis. Signaling protein involved in regulation of thermogenesis and energy balance. Proposed to increase the peripheral response of brown adipose tissue (BAT) to adrenergic stimulation while acting centrally in the hypothalamus to increase sympathetic output to BAT. The protein is Bone morphogenetic protein 8B (Bmp8b) of Mus musculus (Mouse).